The chain runs to 492 residues: Malonyl-CoA decarboxylase, mitochondrial (492 aa).

The transit peptide at 1-38 directs the protein to the mitochondrion; it reads MRGLGPSLRARRLLPLRYPPRPPGPRGPRLCSGLTASA. The interval 39-189 is alpha-helical domain; sequence MDELLRRAVP…VLKSMLSEWF (151 aa). Lys58 bears the N6-acetyllysine mark. Lys167 carries the post-translational modification N6-acetyllysine; alternate. N6-succinyllysine; alternate is present on Lys167. A catalytic domain region spans residues 190–492; it reads SSGFLNLERV…VAQFQSNSKL (303 aa). Lys210 is subject to N6-acetyllysine. Lys221 is subject to N6-succinyllysine. Residue 298–304 coordinates malonyl-CoA; that stretch reads QGVELGT. Lys316 bears the N6-acetyllysine mark. Residue Ser328 coordinates malonyl-CoA. Residue Ser328 is the Proton acceptor of the active site. Lys385 carries the post-translational modification N6-acetyllysine; alternate. Lys385 carries the N6-succinyllysine; alternate modification. Lys388 carries the N6-acetyllysine modification. Position 422 (His422) interacts with malonyl-CoA. Catalysis depends on His422, which acts as the Proton donor. N6-acetyllysine is present on residues Lys441 and Lys471. The Microbody targeting signal motif lies at 490–492; that stretch reads SKL.

As to quaternary structure, homotetramer. Dimer of dimers. The two subunits within a dimer display conformational differences suggesting that at any given moment, only one of the two subunits is competent for malonyl-CoA binding and catalytic activity. Under oxidizing conditions, can form disulfide-linked homotetramers (in vitro). Associates with the peroxisomal targeting signal receptor PEX5. Acetylation at Lys-471 activates malonyl-CoA decarboxylase activity. Deacetylation at Lys-471 by SIRT4 represses activity, leading to promote lipogenesis. In terms of processing, interchain disulfide bonds may form in peroxisomes (Potential). Interchain disulfide bonds are not expected to form in the reducing environment of the cytoplasm and mitochondria. As to expression, expressed in liver, heart, skeletal muscles and adipose tissues (at protein level). Ubiquitous. Strongly expressed in liver, kidney, heart, skeletal muscle and adipose tissues. Weakly expressed in brain.

It localises to the cytoplasm. Its subcellular location is the mitochondrion matrix. The protein localises to the peroxisome. The protein resides in the peroxisome matrix. The enzyme catalyses malonyl-CoA + H(+) = acetyl-CoA + CO2. It functions in the pathway metabolic intermediate biosynthesis; acetyl-CoA biosynthesis; acetyl-CoA from malonyl-CoA: step 1/1. With respect to regulation, malonyl-CoA decarboxylase activity does not require any cofactors or divalent metal ions. In terms of biological role, catalyzes the conversion of malonyl-CoA to acetyl-CoA. In the fatty acid biosynthesis MCD selectively removes malonyl-CoA and thus assures that methyl-malonyl-CoA is the only chain elongating substrate for fatty acid synthase and that fatty acids with multiple methyl side chains are produced. In peroxisomes it may be involved in degrading intraperoxisomal malonyl-CoA, which is generated by the peroxisomal beta-oxidation of odd chain-length dicarboxylic fatty acids. Plays a role in the metabolic balance between glucose and lipid oxidation in muscle independent of alterations in insulin signaling. May play a role in controlling the extent of ischemic injury by promoting glucose oxidation. The protein is Malonyl-CoA decarboxylase, mitochondrial of Rattus norvegicus (Rat).